The following is a 73-amino-acid chain: Large ribosomal subunit protein bL31c (73 aa).

The protein belongs to the bacterial ribosomal protein bL31 family. Type A subfamily. In terms of assembly, part of the 50S ribosomal subunit.

The protein localises to the plastid. It is found in the chloroplast. In terms of biological role, binds the 23S rRNA. This Palmaria palmata (Dulse) protein is Large ribosomal subunit protein bL31c.